Reading from the N-terminus, the 292-residue chain is RWD domain-containing protein 2A (292 aa).

Positions 14 to 134 constitute an RWD domain; the sequence is LEMEMLFSMF…QWLQDNSASY (121 aa).

This Homo sapiens (Human) protein is RWD domain-containing protein 2A (RWDD2A).